A 418-amino-acid polypeptide reads, in one-letter code: Elongation factor Tu, chloroplastic (418 aa).

The tr-type G domain occupies 10-214 (KPHVNIGTIG…NVDSYIPTPQ (205 aa)). The segment at 19–26 (GHVDHGKT) is G1. 19 to 26 (GHVDHGKT) serves as a coordination point for GTP. A Mg(2+)-binding site is contributed by Thr26. The segment at 60 to 64 (GITIN) is G2. Positions 81–84 (DCPG) are G3. GTP contacts are provided by residues 81-85 (DCPGH) and 136-139 (NKED). Residues 136-139 (NKED) form a G4 region. The segment at 174 to 176 (SAL) is G5.

It belongs to the TRAFAC class translation factor GTPase superfamily. Classic translation factor GTPase family. EF-Tu/EF-1A subfamily.

It is found in the plastid. The protein localises to the chloroplast. The enzyme catalyses GTP + H2O = GDP + phosphate + H(+). In terms of biological role, GTP hydrolase that promotes the GTP-dependent binding of aminoacyl-tRNA to the A-site of ribosomes during protein biosynthesis. The sequence is that of Elongation factor Tu, chloroplastic (tufA) from Chlamydomonas reinhardtii (Chlamydomonas smithii).